Here is a 176-residue protein sequence, read N- to C-terminus: Small ribosomal subunit protein uS5 (176 aa).

One can recognise an S5 DRBM domain in the interval 14-77 (MQEKLIHINR…DQARRWMTSI (64 aa)).

Belongs to the universal ribosomal protein uS5 family. As to quaternary structure, part of the 30S ribosomal subunit. Contacts proteins S4 and S8.

Its function is as follows. With S4 and S12 plays an important role in translational accuracy. Functionally, located at the back of the 30S subunit body where it stabilizes the conformation of the head with respect to the body. The polypeptide is Small ribosomal subunit protein uS5 (Acidithiobacillus ferrooxidans (strain ATCC 23270 / DSM 14882 / CIP 104768 / NCIMB 8455) (Ferrobacillus ferrooxidans (strain ATCC 23270))).